Here is a 314-residue protein sequence, read N- to C-terminus: Malate dehydrogenase (314 aa).

Residues 12–17 (GAGFTG) and aspartate 36 each bind NAD(+). Arginine 87 and arginine 93 together coordinate substrate. NAD(+) is bound by residues asparagine 100 and 123 to 125 (LTN). Asparagine 125 contacts substrate. Serine 149 is subject to Phosphoserine. Arginine 156 is a substrate binding site. Residue histidine 180 is the Proton acceptor of the active site.

This sequence belongs to the LDH/MDH superfamily. MDH type 3 family.

It carries out the reaction (S)-malate + NAD(+) = oxaloacetate + NADH + H(+). Functionally, catalyzes the reversible oxidation of malate to oxaloacetate. This Halalkalibacterium halodurans (strain ATCC BAA-125 / DSM 18197 / FERM 7344 / JCM 9153 / C-125) (Bacillus halodurans) protein is Malate dehydrogenase.